A 299-amino-acid chain; its full sequence is MSSYPPHVIVLIGATASGKTELAIEIAEYFKTRIHNIDSRQIYKSMDIGTAKPSENQQKKIKHFLIDIEEPINPINVKQFQEIAQKSIQKEIKQNNLPLLVGGSGLYMNAITKGFFVPDVPPQNNLREQLEELGQKECWELLKNCDPISAKKINLADQIRTIRALEVFYVTGKPLSSQKVQKPPQWKILELGLNRDNLKERISRRTKNMFLSGIIEETKNLISRYGSDLPILETIGYREAKDVLNNNLPIDKAIELTNIKTNQFAKRQKTWFRNKNNPIWLNNKNLLKDAIIKIESFLD.

13–20 provides a ligand contact to ATP; it reads GATASGKT. 15–20 serves as a coordination point for substrate; that stretch reads TASGKT. Positions 38-41 are interaction with substrate tRNA; it reads DSRQ.

Belongs to the IPP transferase family. In terms of assembly, monomer. Requires Mg(2+) as cofactor.

The catalysed reaction is adenosine(37) in tRNA + dimethylallyl diphosphate = N(6)-dimethylallyladenosine(37) in tRNA + diphosphate. In terms of biological role, catalyzes the transfer of a dimethylallyl group onto the adenine at position 37 in tRNAs that read codons beginning with uridine, leading to the formation of N6-(dimethylallyl)adenosine (i(6)A). This is tRNA dimethylallyltransferase from Prochlorococcus marinus (strain MIT 9312).